Here is a 237-residue protein sequence, read N- to C-terminus: Transcriptional regulatory protein YvrH (237 aa).

The 115-residue stretch at 5–119 (SILIVDDEKA…ELAARIRAHL (115 aa)) folds into the Response regulatory domain. D55 bears the 4-aspartylphosphate mark. The segment at residues 131–230 (NQTYTYDYFT…VRGLGYRFIP (100 aa)) is a DNA-binding region (ompR/PhoB-type).

Post-translationally, phosphorylated by YvrG.

The protein resides in the cytoplasm. Functionally, member of the two-component regulatory system YvrG/YvrH that positively regulates 7 transcriptional units (wprA, wapA-yxxG, dltABCDE, sunA, sunT-bdbA-yolJ-bdbB, sigO-rsoA, and sigX-rsiX), and negatively regulates the lytABC operon. This Bacillus subtilis (strain 168) protein is Transcriptional regulatory protein YvrH (yvrH).